We begin with the raw amino-acid sequence, 181 residues long: MIDLNKISKVVVVFIVLLTFLVLMMQSQEVKVAGLLIQFENETTEPEVTAILENYDIPVNYTIDYNSNIGRGVYYVKVDEDKINELRKNENLISEIELKKGNYNIIILSEEFVPDENFLTILEKNNLQLKKVVVCYIHFGDGPADWVVGKNCILERDAIRIKNELETNEKVLIVGLDDIEG.

It belongs to the UPF0228 family.

The polypeptide is UPF0228 protein MA_3117 (Methanosarcina acetivorans (strain ATCC 35395 / DSM 2834 / JCM 12185 / C2A)).